Reading from the N-terminus, the 230-residue chain is Ribonuclease 3 (230 aa).

Positions glutamate 5–glycine 134 constitute an RNase III domain. Position 47 (glutamate 47) interacts with Mg(2+). Aspartate 51 is an active-site residue. Aspartate 120 and glutamate 123 together coordinate Mg(2+). The active site involves glutamate 123. In terms of domain architecture, DRBM spans aspartate 160–glutamate 229.

The protein belongs to the ribonuclease III family. As to quaternary structure, homodimer. Requires Mg(2+) as cofactor.

The protein resides in the cytoplasm. It catalyses the reaction Endonucleolytic cleavage to 5'-phosphomonoester.. Functionally, digests double-stranded RNA. Involved in the processing of primary rRNA transcript to yield the immediate precursors to the large and small rRNAs (23S and 16S). Processes some mRNAs, and tRNAs when they are encoded in the rRNA operon. Processes pre-crRNA and tracrRNA of type II CRISPR loci if present in the organism. The protein is Ribonuclease 3 of Streptococcus equi subsp. zooepidemicus (strain H70).